The following is a 150-amino-acid chain: UPF0178 protein Bcen2424_1660 (150 aa).

The protein belongs to the UPF0178 family.

This Burkholderia cenocepacia (strain HI2424) protein is UPF0178 protein Bcen2424_1660.